A 457-amino-acid chain; its full sequence is Multidrug resistance protein MdtK (457 aa).

12 consecutive transmembrane segments (helical) span residues 11-31 (LLAL…MGVV), 53-73 (IWLP…PIIA), 93-113 (WLAI…KFLI), 127-147 (AVGF…YQVL), 160-180 (GMVI…IFIY), 188-208 (LGGV…FLLM), 243-263 (LPIA…ALLI), 280-300 (FSSL…IRVG), 316-336 (YTGI…SIIL), 357-377 (LMLF…GAGV), 387-407 (IFYI…YILG), and 418-438 (PQGF…MIFA).

The protein belongs to the multi antimicrobial extrusion (MATE) (TC 2.A.66.1) family. MdtK subfamily.

It localises to the cell inner membrane. Its function is as follows. Multidrug efflux pump that functions probably as a Na(+)/drug antiporter. This chain is Multidrug resistance protein MdtK, found in Photorhabdus laumondii subsp. laumondii (strain DSM 15139 / CIP 105565 / TT01) (Photorhabdus luminescens subsp. laumondii).